The sequence spans 578 residues: Cholesterol oxidase (578 aa).

FAD-binding residues include Gly-15, Glu-34, Gly-85, Ala-90, and Val-230. His-470 (proton acceptor) is an active-site residue. Gly-503 is an FAD binding site. A disordered region spans residues 529-551; it reads WPNKGETDRRPPQGEPYRRLAPI. Positions 533 to 546 are enriched in basic and acidic residues; sequence GETDRRPPQGEPYR.

It belongs to the GMC oxidoreductase family. It depends on FAD as a cofactor.

It localises to the secreted. It catalyses the reaction cholesterol + O2 = cholest-5-en-3-one + H2O2. The catalysed reaction is cholest-5-en-3-one = cholest-4-en-3-one. It functions in the pathway steroid metabolism; cholesterol degradation. Its function is as follows. Bifunctional enzyme that catalyzes the oxidation and isomerization of cholesterol to cholestenone (cholest-4-en-3-one), an initial step in the cholesterol degradation process. Contributes to virulence. The polypeptide is Cholesterol oxidase (choD) (Mycobacterium tuberculosis (strain CDC 1551 / Oshkosh)).